Reading from the N-terminus, the 360-residue chain is Photosystem II protein D1 (360 aa).

The next 3 membrane-spanning stretches (helical) occupy residues 29 to 46 (YIGWFGVLMIPCLLTATT), 118 to 133 (HFLLGVAAYMGREWEL), and 142 to 156 (WICVAFSAPVAAATA). Histidine 118 is a binding site for chlorophyll a. Residue tyrosine 126 participates in pheophytin a binding. [CaMn4O5] cluster-binding residues include aspartate 170 and glutamate 189. Residues 197-218 (FHMAGVAGVFGGALFSAMHGSL) form a helical membrane-spanning segment. Histidine 198 serves as a coordination point for chlorophyll a. Residues histidine 215 and 264 to 265 (SF) contribute to the a quinone site. Residue histidine 215 coordinates Fe cation. Histidine 272 is a binding site for Fe cation. The helical transmembrane segment at 274–288 (FLGLWPVVGIWLTSI) threads the bilayer. The [CaMn4O5] cluster site is built by histidine 332, glutamate 333, aspartate 342, and alanine 344. A propeptide spanning residues 345-360 (DNSLLPVASSSPSINS) is cleaved from the precursor.

Belongs to the reaction center PufL/M/PsbA/D family. As to quaternary structure, PSII is composed of 1 copy each of membrane proteins PsbA, PsbB, PsbC, PsbD, PsbE, PsbF, PsbH, PsbI, PsbJ, PsbK, PsbL, PsbM, PsbT, PsbY, PsbZ, Psb30/Ycf12, at least 3 peripheral proteins of the oxygen-evolving complex and a large number of cofactors. It forms dimeric complexes. The D1/D2 heterodimer binds P680, chlorophylls that are the primary electron donor of PSII, and subsequent electron acceptors. It shares a non-heme iron and each subunit binds pheophytin, quinone, additional chlorophylls, carotenoids and lipids. D1 provides most of the ligands for the Mn4-Ca-O5 cluster of the oxygen-evolving complex (OEC). There is also a Cl(-1) ion associated with D1 and D2, which is required for oxygen evolution. The PSII complex binds additional chlorophylls, carotenoids and specific lipids. is required as a cofactor. Tyr-161 forms a radical intermediate that is referred to as redox-active TyrZ, YZ or Y-Z.

The protein resides in the plastid. Its subcellular location is the chloroplast thylakoid membrane. The enzyme catalyses 2 a plastoquinone + 4 hnu + 2 H2O = 2 a plastoquinol + O2. Its function is as follows. Photosystem II (PSII) is a light-driven water:plastoquinone oxidoreductase that uses light energy to abstract electrons from H(2)O, generating O(2) and a proton gradient subsequently used for ATP formation. It consists of a core antenna complex that captures photons, and an electron transfer chain that converts photonic excitation into a charge separation. The D1/D2 (PsbA/PsbD) reaction center heterodimer binds P680, the primary electron donor of PSII as well as several subsequent electron acceptors. This chain is Photosystem II protein D1, found in Cyanidium caldarium (Red alga).